Consider the following 447-residue polypeptide: Tubulin beta-2 chain (447 aa).

Residues Gln-11, Glu-69, Ser-138, Gly-142, Thr-143, Gly-144, Asn-204, and Asn-226 each coordinate GTP. Glu-69 provides a ligand contact to Mg(2+). Positions 427–447 are disordered; the sequence is DASISEGEEEYEEEQQLENEE. Acidic residues predominate over residues 432-447; it reads EGEEEYEEEQQLENEE.

It belongs to the tubulin family. In terms of assembly, dimer of alpha and beta chains. A typical microtubule is a hollow water-filled tube with an outer diameter of 25 nm and an inner diameter of 15 nM. Alpha-beta heterodimers associate head-to-tail to form protofilaments running lengthwise along the microtubule wall with the beta-tubulin subunit facing the microtubule plus end conferring a structural polarity. Microtubules usually have 13 protofilaments but different protofilament numbers can be found in some organisms and specialized cells. Mg(2+) is required as a cofactor.

It is found in the cytoplasm. The protein localises to the cytoskeleton. Its function is as follows. Tubulin is the major constituent of microtubules, a cylinder consisting of laterally associated linear protofilaments composed of alpha- and beta-tubulin heterodimers. Microtubules grow by the addition of GTP-tubulin dimers to the microtubule end, where a stabilizing cap forms. Below the cap, tubulin dimers are in GDP-bound state, owing to GTPase activity of alpha-tubulin. The protein is Tubulin beta-2 chain (TUB2) of Erysiphe pisi (Pea powdery mildew).